The sequence spans 375 residues: Chaperone protein DnaJ (375 aa).

The J domain maps to 5-70; that stretch reads DYYEVLGVER…GKRSAYDQYG (66 aa). The CR-type zinc-finger motif lies at 134-212; it reads GTTVTIRVPT…CHGQGRVEES (79 aa). C147, C150, C164, C167, C186, C189, C200, and C203 together coordinate Zn(2+). 4 CXXCXGXG motif repeats span residues 147–154, 164–171, 186–193, and 200–207; these read CKTCDGTG, CTTCGGIG, CPRCHGSG, and CGSCHGQG.

This sequence belongs to the DnaJ family. Homodimer. Zn(2+) serves as cofactor.

Its subcellular location is the cytoplasm. Functionally, participates actively in the response to hyperosmotic and heat shock by preventing the aggregation of stress-denatured proteins and by disaggregating proteins, also in an autonomous, DnaK-independent fashion. Unfolded proteins bind initially to DnaJ; upon interaction with the DnaJ-bound protein, DnaK hydrolyzes its bound ATP, resulting in the formation of a stable complex. GrpE releases ADP from DnaK; ATP binding to DnaK triggers the release of the substrate protein, thus completing the reaction cycle. Several rounds of ATP-dependent interactions between DnaJ, DnaK and GrpE are required for fully efficient folding. Also involved, together with DnaK and GrpE, in the DNA replication of plasmids through activation of initiation proteins. The protein is Chaperone protein DnaJ of Ectopseudomonas mendocina (strain ymp) (Pseudomonas mendocina).